We begin with the raw amino-acid sequence, 154 residues long: Prefoldin subunit 2 (154 aa).

Positions 1–18 (MAENGGRAGKSSGSGTGK) are enriched in gly residues. 2 disordered regions span residues 1-20 (MAENGGRAGKSSGSGTGKGA) and 124-154 (IRLMGEDEKPAAKENSEGAGAKASSAGVLVS). Over residues 124–139 (IRLMGEDEKPAAKENS) the composition is skewed to basic and acidic residues. Residues 140 to 154 (EGAGAKASSAGVLVS) show a composition bias toward low complexity.

The protein belongs to the prefoldin subunit beta family. As to quaternary structure, heterohexamer of two PFD-alpha type and four PFD-beta type subunits. Component of the PAQosome complex which is responsible for the biogenesis of several protein complexes and which consists of R2TP complex members RUVBL1, RUVBL2, RPAP3 and PIH1D1, URI complex members PFDN2, PFDN6, PDRG1, UXT and URI1 as well as ASDURF, POLR2E and DNAAF10/WDR92. Interacts with URI1; the interaction is phosphorylation-dependent and occurs in a growth-dependent manner.

The protein resides in the nucleus. The protein localises to the cytoplasm. It localises to the mitochondrion. Its function is as follows. Binds specifically to cytosolic chaperonin (c-CPN) and transfers target proteins to it. Binds to nascent polypeptide chain and promotes folding in an environment in which there are many competing pathways for nonnative proteins. The protein is Prefoldin subunit 2 (PFDN2) of Bos taurus (Bovine).